Consider the following 513-residue polypeptide: NADH-quinone oxidoreductase subunit N (513 aa).

Transmembrane regions (helical) follow at residues 20–40 (SVGF…LIVV), 49–69 (STLL…FIYQ), 88–108 (FAIF…VITM), 117–137 (ISSM…MMMM), 144–164 (LMIF…AGYF), 178–198 (LIYG…IYGV), 219–239 (FVML…IGAV), 260–280 (LSVA…YVAL), 295–315 (WFTL…VVAL), 323–343 (LLAY…IVMD), 351–371 (LFYL…VVLI), 394–414 (GAAL…IGFI), 429–451 (IFMW…YMLI), and 474–494 (LVAQ…GLFF).

It belongs to the complex I subunit 2 family. NDH-1 is composed of 14 different subunits. Subunits NuoA, H, J, K, L, M, N constitute the membrane sector of the complex.

It localises to the cell inner membrane. It carries out the reaction a quinone + NADH + 5 H(+)(in) = a quinol + NAD(+) + 4 H(+)(out). Functionally, NDH-1 shuttles electrons from NADH, via FMN and iron-sulfur (Fe-S) centers, to quinones in the respiratory chain. The immediate electron acceptor for the enzyme in this species is believed to be a menaquinone. Couples the redox reaction to proton translocation (for every two electrons transferred, four hydrogen ions are translocated across the cytoplasmic membrane), and thus conserves the redox energy in a proton gradient. This is NADH-quinone oxidoreductase subunit N from Chlorobium chlorochromatii (strain CaD3).